Consider the following 309-residue polypeptide: Porphobilinogen deaminase (309 aa).

Position 240 is an S-(dipyrrolylmethanemethyl)cysteine (Cys-240).

This sequence belongs to the HMBS family. In terms of assembly, monomer. The cofactor is dipyrromethane.

The enzyme catalyses 4 porphobilinogen + H2O = hydroxymethylbilane + 4 NH4(+). The protein operates within porphyrin-containing compound metabolism; protoporphyrin-IX biosynthesis; coproporphyrinogen-III from 5-aminolevulinate: step 2/4. Functionally, tetrapolymerization of the monopyrrole PBG into the hydroxymethylbilane pre-uroporphyrinogen in several discrete steps. In Brevibacillus brevis (strain 47 / JCM 6285 / NBRC 100599), this protein is Porphobilinogen deaminase.